The following is a 620-amino-acid chain: MKQSKMIIPTLREMPSDASVISHALMLRAGYVRQISAGIYSYLPLANRVIEKAKNIMREEFDKIDAIEFLAPALLSADIWRESGRYETYGDDLYKLKNREGSDFILGPTHEETVTLLARDAVQSYKQLPLNIYQIQPKYRDEKRPRNGLLRGREFIMKDGYSFHASYESLDQTYDDYKAAYEAIFTRAGLEFKAIIGDGGAMGGKDSQEFMAITPDRTDLDRWVVLDKSVASFEEIPEDVLEAFKAELLAWSVSGEDTIAYSSESGYAANLEMATSEYKPSTAVVVEEDLVKVATPDAKTIDEVAAFLNVAEEQTIKTMLFMADGEPVVALLVGNDQVNDVKLKNHLAADFFDVASPADAEKVFGAGFGSLGPVGLPENIKIIADRKVQDVKNAVVGANEDGFHYTGANAGRDFQVTEYVDIREVKEGEPSPDGHGVLNFARGIEIGHIFKLGTRYSDSMNANILDENGRSMPIIMGCYGIGVSRLLSAVLEQHARLFVNKTPKGEYRYAWGINFPKELAPFDVHLIPVNVKDEAAMELTQSIEASLVGAGYEVLTDDRNERVGVKFSDSDLIGLPIRVTVGKKAADGIVEVKIKGTGDTVEVHVDQLLETLQILTKENE.

The protein belongs to the class-II aminoacyl-tRNA synthetase family. ProS type 1 subfamily. In terms of assembly, homodimer.

It localises to the cytoplasm. The enzyme catalyses tRNA(Pro) + L-proline + ATP = L-prolyl-tRNA(Pro) + AMP + diphosphate. Its function is as follows. Catalyzes the attachment of proline to tRNA(Pro) in a two-step reaction: proline is first activated by ATP to form Pro-AMP and then transferred to the acceptor end of tRNA(Pro). As ProRS can inadvertently accommodate and process non-cognate amino acids such as alanine and cysteine, to avoid such errors it has two additional distinct editing activities against alanine. One activity is designated as 'pretransfer' editing and involves the tRNA(Pro)-independent hydrolysis of activated Ala-AMP. The other activity is designated 'posttransfer' editing and involves deacylation of mischarged Ala-tRNA(Pro). The misacylated Cys-tRNA(Pro) is not edited by ProRS. The protein is Proline--tRNA ligase of Streptococcus suis (strain 98HAH33).